A 29-amino-acid polypeptide reads, in one-letter code: Histone H2B (29 aa).

A disordered region spans residues 1-29; sequence MPEPAKSAPKKGSTRTAAKGGKKRRKSRK. N6-acetyllysine occurs at positions 6 and 11. Ser13 carries the phosphoserine modification. A compositionally biased stretch (basic residues) spans 20–29; that stretch reads GGKKRRKSRK.

This sequence belongs to the histone H2B family. As to quaternary structure, the nucleosome is a histone octamer containing two molecules each of H2A, H2B, H3 and H4 assembled in one H3-H4 heterotetramer and two H2A-H2B heterodimers. The octamer wraps approximately 147 bp of DNA. Monoubiquitination at the C-terminal Lys gives a specific tag for epigenetic transcriptional activation and is also prerequisite for histone H3 'Lys-4' and 'Lys-79' methylation. In terms of processing, phosphorylated during apoptosis; which facilitates apoptotic chromatin condensation.

It localises to the nucleus. The protein localises to the chromosome. Its function is as follows. Core component of nucleosome. Nucleosomes wrap and compact DNA into chromatin, limiting DNA accessibility to the cellular machineries which require DNA as a template. Histones thereby play a central role in transcription regulation, DNA repair, DNA replication and chromosomal stability. DNA accessibility is regulated via a complex set of post-translational modifications of histones, also called histone code, and nucleosome remodeling. This Cyprinus carpio (Common carp) protein is Histone H2B.